A 479-amino-acid chain; its full sequence is D-alanyl-D-alanine carboxypeptidase DacB (479 aa).

Residues 1-26 (MKKLSSISTALGSFLLSVSFSLPTFA) form the signal peptide. Ser-69 serves as the catalytic Acyl-ester intermediate. Lys-72 (proton acceptor) is an active-site residue. The active site involves Ser-310. Residue Lys-420 participates in substrate binding.

This sequence belongs to the peptidase S13 family.

The protein localises to the periplasm. The enzyme catalyses Preferential cleavage: (Ac)2-L-Lys-D-Ala-|-D-Ala. Also transpeptidation of peptidyl-alanyl moieties that are N-acyl substituents of D-alanine.. The protein operates within cell wall biogenesis; peptidoglycan biosynthesis. Functionally, not involved in transpeptidation but exclusively catalyzes a DD-carboxypeptidase and DD-endopeptidase reaction. The protein is D-alanyl-D-alanine carboxypeptidase DacB (dacB) of Haemophilus influenzae (strain ATCC 51907 / DSM 11121 / KW20 / Rd).